The primary structure comprises 268 residues: Undecaprenyl-diphosphatase (268 aa).

The next 7 membrane-spanning stretches (helical) occupy residues 43–63, 85–105, 108–128, 141–161, 184–204, 217–237, and 246–266; these read FWKTFAVLIQLGAILAILAIY, IGVLVAFLPAVILGLIFGTFI, VLFNPWVVCFSLIAGGAVLLW, AMAFPLPMYLGIGIAQCAAMV, AAEFSFFLAIPTMLGAFVYDV, FIIIVGFVVSFITAIVVVKTF, and FTFFAWWRVIVGTLGLIALAL.

Belongs to the UppP family.

The protein localises to the cell inner membrane. It carries out the reaction di-trans,octa-cis-undecaprenyl diphosphate + H2O = di-trans,octa-cis-undecaprenyl phosphate + phosphate + H(+). In terms of biological role, catalyzes the dephosphorylation of undecaprenyl diphosphate (UPP). Confers resistance to bacitracin. This Afipia carboxidovorans (strain ATCC 49405 / DSM 1227 / KCTC 32145 / OM5) (Oligotropha carboxidovorans) protein is Undecaprenyl-diphosphatase.